A 317-amino-acid chain; its full sequence is Transaldolase (317 aa).

The Schiff-base intermediate with substrate role is filled by K126.

The protein belongs to the transaldolase family. Type 1 subfamily. In terms of assembly, homodimer.

The protein resides in the cytoplasm. It catalyses the reaction D-sedoheptulose 7-phosphate + D-glyceraldehyde 3-phosphate = D-erythrose 4-phosphate + beta-D-fructose 6-phosphate. The protein operates within carbohydrate degradation; pentose phosphate pathway; D-glyceraldehyde 3-phosphate and beta-D-fructose 6-phosphate from D-ribose 5-phosphate and D-xylulose 5-phosphate (non-oxidative stage): step 2/3. Functionally, transaldolase is important for the balance of metabolites in the pentose-phosphate pathway. In Burkholderia vietnamiensis (strain G4 / LMG 22486) (Burkholderia cepacia (strain R1808)), this protein is Transaldolase.